The sequence spans 249 residues: Uridylate kinase (249 aa).

19–22 (KLSG) contributes to the ATP binding site. Residue Gly61 coordinates UMP. The ATP site is built by Gly62 and Arg66. UMP is bound by residues Asp81 and 142–149 (TGNPYFTT). Positions 169, 175, and 178 each coordinate ATP.

It belongs to the UMP kinase family. In terms of assembly, homohexamer.

The protein localises to the cytoplasm. It catalyses the reaction UMP + ATP = UDP + ADP. The protein operates within pyrimidine metabolism; CTP biosynthesis via de novo pathway; UDP from UMP (UMPK route): step 1/1. With respect to regulation, inhibited by UTP. Its function is as follows. Catalyzes the reversible phosphorylation of UMP to UDP. The polypeptide is Uridylate kinase (Anaeromyxobacter sp. (strain Fw109-5)).